The sequence spans 500 residues: Cytochrome P450 2D4 (500 aa).

Cys-446 contributes to the heme binding site.

It belongs to the cytochrome P450 family. Heme is required as a cofactor. Brain.

Its subcellular location is the endoplasmic reticulum membrane. It localises to the microsome membrane. The catalysed reaction is an organic molecule + reduced [NADPH--hemoprotein reductase] + O2 = an alcohol + oxidized [NADPH--hemoprotein reductase] + H2O + H(+). Its function is as follows. Cytochromes P450 are a group of heme-thiolate monooxygenases. In liver microsomes, this enzyme is involved in an NADPH-dependent electron transport pathway. It oxidizes a variety of structurally unrelated compounds, including steroids, fatty acids, and xenobiotics. This chain is Cytochrome P450 2D4 (Cyp2d4), found in Rattus norvegicus (Rat).